Consider the following 297-residue polypeptide: 4-hydroxy-tetrahydrodipicolinate synthase (297 aa).

Threonine 47 provides a ligand contact to pyruvate. Tyrosine 136 (proton donor/acceptor) is an active-site residue. Lysine 165 acts as the Schiff-base intermediate with substrate in catalysis. Residue isoleucine 206 participates in pyruvate binding.

This sequence belongs to the DapA family. In terms of assembly, homotetramer; dimer of dimers.

Its subcellular location is the cytoplasm. It carries out the reaction L-aspartate 4-semialdehyde + pyruvate = (2S,4S)-4-hydroxy-2,3,4,5-tetrahydrodipicolinate + H2O + H(+). It functions in the pathway amino-acid biosynthesis; L-lysine biosynthesis via DAP pathway; (S)-tetrahydrodipicolinate from L-aspartate: step 3/4. In terms of biological role, catalyzes the condensation of (S)-aspartate-beta-semialdehyde [(S)-ASA] and pyruvate to 4-hydroxy-tetrahydrodipicolinate (HTPA). This Campylobacter fetus subsp. fetus (strain 82-40) protein is 4-hydroxy-tetrahydrodipicolinate synthase.